A 535-amino-acid chain; its full sequence is Flavin-containing monooxygenase iboF (535 aa).

An N-terminal signal peptide occupies residues 1–24 (MFSLRPTALVSLSVVLFSIQETLS). 60–65 (GAGPSG) provides a ligand contact to FAD. Residues Asn134, Asn243, and Asn300 are each glycosylated (N-linked (GlcNAc...) asparagine). Residue 307 to 312 (GAAASG) participates in NADP(+) binding. 3 N-linked (GlcNAc...) asparagine glycosylation sites follow: Asn356, Asn382, and Asn410.

It belongs to the FMO family. FAD serves as cofactor.

It participates in secondary metabolite biosynthesis. In terms of biological role, flavin-containing monooxygenase; part of the gene cluster that mediates the biosynthesis of the psychoactive metabolites ibotenic acid and muscimol. The first committed step is glutamate hydroxylation by the 2-oxoglutarate-dependent dioxygenase iboH, and the last step is decarboxylation of ibotenic acid to muscimol by the decarboxylase iboD. The order of the intermediate reactions is somewhat ambiguous. IboA likely activates the carboxylic acid at position 5 to introduce an amide bond, and the flavin monooxygenase iboF generates the N-O bond. There are several options for the latter step. One option is that iboF directly hydroxylates the amide nitrogen formed by iboA to produce a hydroxamic acid species. Another option is that iboF hydroxylates an external N-containing compound, whose resulting N-O bond is subsequently introduced into the hydroxyglutamate scaffold. The paralogous PLP-dependent cystathionine gamma-synthase-like enzymes iboG1 and iboG2 are likely involved in substitution of the OH group at position 3 by the O-N moiety. The first cyclic intermediate is most probably tricholomic acid which is likely desaturated to ibotenic acid by the cytochrome P450 monooxygenase iboC. The chain is Flavin-containing monooxygenase iboF from Amanita muscaria (strain Koide BX008).